The sequence spans 324 residues: Polyprenol dehydrogenase (324 aa).

The active-site Proton acceptor is Y206. Residues Y206, K210, and T243 each contribute to the NAD(+) site.

The protein belongs to the short-chain dehydrogenases/reductases (SDR) family.

It localises to the lipid droplet. The enzyme catalyses a di-trans,poly-cis-polyprenol + NAD(+) = a di-trans,poly-cis-polyprenal + NADH + H(+). It carries out the reaction a di-trans,poly-cis-polyprenol + NADP(+) = a di-trans,poly-cis-polyprenal + NADPH + H(+). The catalysed reaction is a di-trans,poly-cis-dolichol + NADP(+) = a di-trans,poly-cis-dolichal + NADPH + H(+). It catalyses the reaction a di-trans,poly-cis-dolichol + NAD(+) = a di-trans,poly-cis-dolichal + NADH + H(+). It functions in the pathway protein modification; protein glycosylation. Functionally, oxidoreductase that plays a key role in early steps of protein N-linked glycosylation by mediating two non-consecutive steps in dolichol biosynthesis. Acts both as a NAD(+)-dependent dehydrogenase and as a NADPH-dependent reductase during the conversion of polyprenol into dolichol. First catalyzes the NAD(+)-dependent dehydrogenation of polyprenol into polyprenal; polyprenal is then reduced into dolichal by srd5a3. It then catalyzes the NADPH-dependent reduction of dolichal into dolichol. This chain is Polyprenol dehydrogenase, found in Danio rerio (Zebrafish).